The primary structure comprises 342 residues: Mitochondrial fission factor (342 aa).

Over 1-322 (MSKGTSSDTS…ENKERAKREM (322 aa)) the chain is Cytoplasmic. Residue threonine 115 is modified to Phosphothreonine. Alanine 146 carries the phosphoserine modification. Residue arginine 149 is modified to Phosphothreonine. Phosphoserine is present on residues lysine 151, serine 155, serine 157, and serine 172. A Phosphothreonine modification is found at threonine 200. Serine 202, serine 229, serine 233, and serine 295 each carry phosphoserine. A coiled-coil region spans residues 291–322 (VDAASLRRQIIKLNRRLQLLEEENKERAKREM). A helical; Anchor for type IV membrane protein transmembrane segment spans residues 323 to 340 (VMYSITVAFWLLNSWLWF). The Mitochondrial intermembrane portion of the chain corresponds to 341–342 (RR).

This sequence belongs to the Tango11 family. Homodimer. Interacts with DNM1L. Interacts with C11orf65/MFI; the interaction inhibits MFF interaction with DNM1L. Highly expressed in heart, kidney, liver, brain, muscle, and stomach.

It localises to the mitochondrion outer membrane. The protein resides in the peroxisome. The protein localises to the cytoplasmic vesicle. Its subcellular location is the secretory vesicle. It is found in the synaptic vesicle. Plays a role in mitochondrial and peroxisomal fission. Promotes the recruitment and association of the fission mediator dynamin-related protein 1 (DNM1L) to the mitochondrial surface. May be involved in regulation of synaptic vesicle membrane dynamics by recruitment of DNM1L to clathrin-containing vesicles. This chain is Mitochondrial fission factor (MFF), found in Homo sapiens (Human).